Reading from the N-terminus, the 131-residue chain is Lysosomal enzyme trafficking factor (131 aa).

2 helical membrane passes run 8 to 28 and 66 to 86; these read MGWIGVSLYLFVSAAAFYYVF and LPFWLWAALFLIPYFQVFLFL.

Belongs to the LYSET family.

Its subcellular location is the golgi apparatus membrane. Required for mannose-6-phosphate-dependent trafficking of lysosomal enzymes. LYSET bridges GlcNAc-1-phosphate transferase (GNPTAB), to the membrane-bound transcription factor site-1 protease (MBTPS1), thus allowing proteolytic activation of the GNPTAB. GNPTAB is involved in the regulation of M6P-dependent Golgi-to-lysosome trafficking of lysosomal enzymes. LYSET is thus an essential factor for maturation and delivery of lysosomal hydrolases. This chain is Lysosomal enzyme trafficking factor (lyset-b), found in Xenopus laevis (African clawed frog).